Reading from the N-terminus, the 369-residue chain is 3-dehydroquinate synthase (369 aa).

NAD(+)-binding positions include 75-80 (DGEEHK), 109-113 (GVIGD), 133-134 (TT), Lys146, Lys155, and 173-176 (TLKT). The Zn(2+) site is built by Glu188, His251, and His268.

Belongs to the sugar phosphate cyclases superfamily. Dehydroquinate synthase family. Co(2+) serves as cofactor. Requires Zn(2+) as cofactor. The cofactor is NAD(+).

Its subcellular location is the cytoplasm. It carries out the reaction 7-phospho-2-dehydro-3-deoxy-D-arabino-heptonate = 3-dehydroquinate + phosphate. The protein operates within metabolic intermediate biosynthesis; chorismate biosynthesis; chorismate from D-erythrose 4-phosphate and phosphoenolpyruvate: step 2/7. Catalyzes the conversion of 3-deoxy-D-arabino-heptulosonate 7-phosphate (DAHP) to dehydroquinate (DHQ). The sequence is that of 3-dehydroquinate synthase from Legionella pneumophila (strain Corby).